The sequence spans 620 residues: Coenzyme F420-dependent sulfite reductase (620 aa).

One can recognise a 4Fe-4S ferredoxin-type 1 domain in the interval 6–35; sequence LNEIVDSGVCARCGTCTIVCPNGILTFDER. [4Fe-4S] cluster contacts are provided by Cys-15, Cys-18, Cys-21, Cys-25, Cys-428, Cys-434, Cys-468, Cys-472, Cys-495, Cys-498, Cys-501, Cys-505, Cys-524, Cys-527, Cys-530, and Cys-534. Cys-472 lines the siroheme pocket. 2 consecutive 4Fe-4S ferredoxin-type domains span residues 486–515 and 520–544; these read KYPK…IRGE and NYNV…VKEE.

Belongs to the nitrite and sulfite reductase 4Fe-4S domain family. It depends on [4Fe-4S] cluster as a cofactor. The cofactor is siroheme.

It catalyses the reaction 3 oxidized coenzyme F420-(gamma-L-Glu)(n) + hydrogen sulfide + 3 H2O + 2 H(+) = 3 reduced coenzyme F420-(gamma-L-Glu)(n) + sulfite. Catalyzes the reduction of sulfite to sulfide using reduced F420 as the electron source. Involved in sulfite detoxification and assimilation. Cannot use NADH or NADPH. The chain is Coenzyme F420-dependent sulfite reductase from Methanocaldococcus jannaschii (strain ATCC 43067 / DSM 2661 / JAL-1 / JCM 10045 / NBRC 100440) (Methanococcus jannaschii).